The primary structure comprises 109 residues: Ribulose bisphosphate carboxylase small subunit (109 aa).

This sequence belongs to the RuBisCO small chain family. Heterohexadecamer of 8 large and 8 small subunits.

The protein resides in the carboxysome. In terms of biological role, ruBisCO catalyzes two reactions: the carboxylation of D-ribulose 1,5-bisphosphate, the primary event in carbon dioxide fixation, as well as the oxidative fragmentation of the pentose substrate in the photorespiration process. Both reactions occur simultaneously and in competition at the same active site. Although the small subunit is not catalytic it is essential for maximal activity. This Prochlorothrix hollandica protein is Ribulose bisphosphate carboxylase small subunit.